Reading from the N-terminus, the 517-residue chain is Bifunctional purine biosynthesis protein PurH (517 aa).

An MGS-like domain is found at 1–146 (MAPIALLSVS…KNHAHVAVLT (146 aa)).

Belongs to the PurH family.

It carries out the reaction (6R)-10-formyltetrahydrofolate + 5-amino-1-(5-phospho-beta-D-ribosyl)imidazole-4-carboxamide = 5-formamido-1-(5-phospho-D-ribosyl)imidazole-4-carboxamide + (6S)-5,6,7,8-tetrahydrofolate. It catalyses the reaction IMP + H2O = 5-formamido-1-(5-phospho-D-ribosyl)imidazole-4-carboxamide. The protein operates within purine metabolism; IMP biosynthesis via de novo pathway; 5-formamido-1-(5-phospho-D-ribosyl)imidazole-4-carboxamide from 5-amino-1-(5-phospho-D-ribosyl)imidazole-4-carboxamide (10-formyl THF route): step 1/1. It participates in purine metabolism; IMP biosynthesis via de novo pathway; IMP from 5-formamido-1-(5-phospho-D-ribosyl)imidazole-4-carboxamide: step 1/1. The protein is Bifunctional purine biosynthesis protein PurH of Prochlorococcus marinus (strain MIT 9303).